The chain runs to 510 residues: Probable cytochrome P450 4aa1 (510 aa).

Cys-450 is a heme binding site.

This sequence belongs to the cytochrome P450 family. Heme is required as a cofactor.

It localises to the endoplasmic reticulum membrane. The protein localises to the microsome membrane. May be involved in the metabolism of insect hormones and in the breakdown of synthetic insecticides. The sequence is that of Probable cytochrome P450 4aa1 (Cyp4aa1) from Drosophila melanogaster (Fruit fly).